We begin with the raw amino-acid sequence, 712 residues long: Ribosomal RNA large subunit methyltransferase K/L (712 aa).

In terms of domain architecture, THUMP spans G46–L157.

This sequence belongs to the methyltransferase superfamily. RlmKL family.

It localises to the cytoplasm. It catalyses the reaction guanosine(2445) in 23S rRNA + S-adenosyl-L-methionine = N(2)-methylguanosine(2445) in 23S rRNA + S-adenosyl-L-homocysteine + H(+). The enzyme catalyses guanosine(2069) in 23S rRNA + S-adenosyl-L-methionine = N(2)-methylguanosine(2069) in 23S rRNA + S-adenosyl-L-homocysteine + H(+). Specifically methylates the guanine in position 2445 (m2G2445) and the guanine in position 2069 (m7G2069) of 23S rRNA. The protein is Ribosomal RNA large subunit methyltransferase K/L of Actinobacillus pleuropneumoniae serotype 3 (strain JL03).